The primary structure comprises 449 residues: Asparagine--tRNA ligase (449 aa).

The protein belongs to the class-II aminoacyl-tRNA synthetase family. Homodimer.

It is found in the cytoplasm. It carries out the reaction tRNA(Asn) + L-asparagine + ATP = L-asparaginyl-tRNA(Asn) + AMP + diphosphate + H(+). This Mesomycoplasma hyopneumoniae (strain J / ATCC 25934 / NCTC 10110) (Mycoplasma hyopneumoniae) protein is Asparagine--tRNA ligase.